Reading from the N-terminus, the 712-residue chain is Saccharolysin (712 aa).

Residue Ser-73 is modified to Phosphoserine. His-501 contacts Zn(2+). Glu-502 is a catalytic residue. Residues His-505 and His-508 each coordinate Zn(2+).

It belongs to the peptidase M3 family. The cofactor is Zn(2+).

It localises to the cytoplasm. The enzyme catalyses Cleavage of Pro-|-Phe and Ala-|-Ala bonds.. Could be involved in late stage of protein degradation. The polypeptide is Saccharolysin (PRD1) (Saccharomyces cerevisiae (strain ATCC 204508 / S288c) (Baker's yeast)).